A 228-amino-acid polypeptide reads, in one-letter code: RNA chaperone ProQ (228 aa).

The segment at 107 to 178 (KARVQAQRAE…REEKHTPVSD (72 aa)) is disordered. Basic and acidic residues-rich tracts occupy residues 117–136 (QQAK…DAPR) and 146–175 (RRKE…KHTP).

It belongs to the ProQ family.

The protein localises to the cytoplasm. RNA chaperone with significant RNA binding, RNA strand exchange and RNA duplexing activities. May regulate ProP activity through an RNA-based, post-transcriptional mechanism. This Salmonella agona (strain SL483) protein is RNA chaperone ProQ.